The primary structure comprises 1062 residues: MVSSAQMGFNLQALLEQLSQDELSKFKYLITTFSLAHELQKIPHKEVDKADGKQLVEILTTHCDSYWVEMASLQVFEKMHRMDLSERAKDEVREAALKSFNKRKPLSLGITRKERPPLDVDEMLERFKTEAQAFTETKGNVICLGKEVFKGKKPDKDNRCRYILKTKFREMWKSWPGDSKEVQVMAERYKMLIPFSNPRVLPGPFSYTVVLYGPAGLGKTTLAQKLMLDWAEDNLIHKFKYAFYLSCRELSRLGPCSFAELVFRDWPELQDDIPHILAQARKILFVIDGFDELGAAPGALIEDICGDWEKKKPVPVLLGSLLNRVMLPKAALLVTTRPRALRDLRILAEEPIYIRVEGFLEEDRRAYFLRHFGDEDQAMRAFELMRSNAALFQLGSAPAVCWIVCTTLKLQMEKGEDPVPTCLTRTGLFLRFLCSRFPQGAQLRGALRTLSLLAAQGLWAQTSVLHREDLERLGVQESDLRLFLDGDILRQDRVSKGCYSFIHLSFQQFLTALFYTLEKEEEEDRDGHTWDIGDVQKLLSGVERLRNPDLIQAGYYSFGLANEKRAKELEATFGCRMSPDIKQELLRCDISCKGGHSTVTDLQELLGCLYESQEEELVKEVMAQFKEISLHLNAVDVVPSSFCVKHCRNLQKMSLQVIKENLPENVTASESDAEVERSQDDQHMLPFWTDLCSIFGSNKDLMGLAINDSFLSASLVRILCEQIASDTCHLQRVVFKNISPADAHRNLCLALRGHKTVTYLTLQGNDQDDMFPALCEVLRHPECNLRYLGLVSCSATTQQWADLSLALEVNQSLTCVNLSDNELLDEGAKLLYTTLRHPKCFLQRLSLENCHLTEANCKDLAAVLVVSRELTHLCLAKNPIGNTGVKFLCEGLRYPECKLQTLVLWNCDITSDGCCDLTKLLQEKSSLLCLDLGLNHIGVKGMKFLCEALRKPLCNLRCLWLWGCSIPPFSCEDLCSALSCNQSLVTLDLGQNPLGSSGVKMLFETLTCSSGTLRTLRLKIDDFNDELNKLLEEIEEKNPQLIIDTEKHHPWAERPSSHDFMI.

One can recognise a Pyrin domain in the interval 1–94 (MVSSAQMGFN…SERAKDEVRE (94 aa)). The region spanning 207 to 526 (YTVVLYGPAG…LEKEEEEDRD (320 aa)) is the NACHT domain. 213 to 220 (GPAGLGKT) serves as a coordination point for ATP. At Ser671 the chain carries Phosphoserine. LRR repeat units follow at residues 812 to 832 (SLTC…KLLY), 841 to 861 (FLQR…KDLA), 869 to 889 (ELTH…KFLC), 898 to 918 (KLQT…CDLT), 926 to 946 (SLLC…KFLC), 955 to 976 (NLRC…DLCS), 983 to 1003 (SLVT…KMLF), and 1010 to 1033 (SGTL…LLEE).

This sequence belongs to the NLRP family. Interacts with CHUK. Interacts with IKBKB. Interacts with IKBKG. Interacts with MEFV. Interacts with PYCARD. Interacts (via pyrin domain) with PYDC2. Interacts with CARD8. As to expression, expressed at high levels in lung, placenta and thymus and at lower levels in ovary, intestine and brain. Highly abundant in oocytes and early embryos, however poorly expressed in somatic tissues such as brain, kidney, liver and spinal cord.

It localises to the cytoplasm. Its function is as follows. Suppresses TNF- and CD40-induced NFKB1 activity at the level of the IKK complex, by inhibiting NFKBIA degradation induced by TNF. When associated with PYCARD, activates CASP1, leading to the secretion of mature pro-inflammatory cytokine IL1B. May be a component of the inflammasome, a protein complex which also includes PYCARD, CARD8 and CASP1 and whose function would be the activation of pro-inflammatory caspases. The polypeptide is NACHT, LRR and PYD domains-containing protein 2 (NLRP2) (Homo sapiens (Human)).